We begin with the raw amino-acid sequence, 410 residues long: MTEMTEKATTFLTSQEAPAFPADRTCPYQLPTAYSRLRDEPDALRPVTLYDGRRAWVVTKHEAARRLLADPRLSSDRLHADFPATSPRFKAFRQGSPAFIGMDPPEHGTRRRMTISEFTVKRIKGMRPDVERIVHGFIDDMLAAGPTADLVSQFALPVPSMVICHMLGVPYADHEFFQDASKRLVQAVDADSAVAARDDFERYLDGLITKLESEPGTGLLGKLVTHQLADGEIDRAELISTALLLLVAGHETTASMTSLSVITLLEHPDQHAALRADPSLVPGAVEELLRVLAIADIAGGRIATADIEIDGQLIRAGEGVIVTNSIANRDSSVFENPDRLDVHRSARHHLSFGYGVHQCLGQNLARLELEVILTVLFDRIPTLRLAVPVEQLTLRPGTTIQGVNELPVTW.

Heme is bound at residue cysteine 359.

This sequence belongs to the cytochrome P450 family. Monomer. It depends on heme as a cofactor.

Its function is as follows. Catalyzes the hydroxylation of sodium ML-236B carboxylate to pravastatin. The sequence is that of Cytochrome P450 105A3 (cyp105A3) from Streptomyces carbophilus.